Consider the following 206-residue polypeptide: Large ribosomal subunit protein uL4 (206 aa).

Residues 46-78 (GNRAQKDREQVKHTTKKPWRQKGTGRARAGMSS) are disordered. The span at 58 to 70 (HTTKKPWRQKGTG) shows a compositional bias: basic residues.

This sequence belongs to the universal ribosomal protein uL4 family. As to quaternary structure, part of the 50S ribosomal subunit.

Functionally, one of the primary rRNA binding proteins, this protein initially binds near the 5'-end of the 23S rRNA. It is important during the early stages of 50S assembly. It makes multiple contacts with different domains of the 23S rRNA in the assembled 50S subunit and ribosome. In terms of biological role, forms part of the polypeptide exit tunnel. This chain is Large ribosomal subunit protein uL4, found in Burkholderia cenocepacia (strain ATCC BAA-245 / DSM 16553 / LMG 16656 / NCTC 13227 / J2315 / CF5610) (Burkholderia cepacia (strain J2315)).